The sequence spans 319 residues: L-lactate dehydrogenase (319 aa).

NAD(+) is bound by residues Val17, Asp38, Lys43, Tyr69, and 83 to 84 (GA). Positions 86 and 92 each coordinate substrate. NAD(+)-binding positions include Thr105, 122–124 (ATN), and Ser147. Substrate is bound at residue 124-127 (NPVD). Residue 152 to 155 (DTAR) coordinates substrate. Beta-D-fructose 1,6-bisphosphate-binding residues include Arg157 and His172. His179 acts as the Proton acceptor in catalysis. The residue at position 224 (Tyr224) is a Phosphotyrosine. Thr233 provides a ligand contact to substrate.

The protein belongs to the LDH/MDH superfamily. LDH family. Homotetramer.

Its subcellular location is the cytoplasm. It carries out the reaction (S)-lactate + NAD(+) = pyruvate + NADH + H(+). It participates in fermentation; pyruvate fermentation to lactate; (S)-lactate from pyruvate: step 1/1. Its activity is regulated as follows. Allosterically activated by fructose 1,6-bisphosphate (FBP). Functionally, catalyzes the conversion of lactate to pyruvate. The chain is L-lactate dehydrogenase from Geobacillus sp. (strain WCH70).